The sequence spans 462 residues: Probable protein phosphatase 2C 1 (462 aa).

One can recognise a PPM-type phosphatase domain in the interval 60–362 (SSCIFTQQGR…DDCAVVCLFL (303 aa)). 4 residues coordinate Mn(2+): aspartate 95, glycine 96, aspartate 307, and aspartate 353. 2 disordered regions span residues 369 to 394 (ETSD…QGAE) and 421 to 443 (EADN…LEGV). Residues 376 to 385 (QCFSSATNAV) are compositionally biased toward polar residues. The span at 424 to 434 (NAEKEKTREGE) shows a compositional bias: basic and acidic residues.

Belongs to the PP2C family. Interacts with GCN5. It depends on Mg(2+) as a cofactor. Mn(2+) serves as cofactor.

The catalysed reaction is O-phospho-L-seryl-[protein] + H2O = L-seryl-[protein] + phosphate. It catalyses the reaction O-phospho-L-threonyl-[protein] + H2O = L-threonyl-[protein] + phosphate. May act as negative regulator of GCN5. This is Probable protein phosphatase 2C 1 (PPC6-6) from Arabidopsis thaliana (Mouse-ear cress).